The sequence spans 645 residues: Sodium/hydrogen exchanger 9 (645 aa).

Topologically, residues 1-20 (MERQSRVMSEKDEYQFQHQG) are lumenal. A helical transmembrane segment spans residues 21–41 (AVELLVFNFLLILTILTIWLF). Residues 42–45 (KNHR) are Cytoplasmic-facing. A helical transmembrane segment spans residues 46–66 (FRFLHETGGAMVYGLIMGLIL). Residues 67-126 (RYATAPTDIESGTVYDCVKLTFSPSTLLVNITDQVYEYKYKREISQHNINPHQGNAILEK) lie on the Lumenal side of the membrane. N96 carries an N-linked (GlcNAc...) asparagine glycan. Residues 127-147 (MTFDPEIFFNVLLPPIIFHAG) traverse the membrane as a helical segment. Residues 148–164 (YSLKKRHFFQNLGSILT) lie on the Cytoplasmic side of the membrane. The helical transmembrane segment at 165–185 (YAFLGTAISCIVIGLIMYGFV) threads the bilayer. The Lumenal portion of the chain corresponds to 186–203 (KAMIHAGQLKNGDFHFTD). A helical transmembrane segment spans residues 204 to 224 (CLFFGSLMSATDPVTVLAIFH). Topologically, residues 225 to 235 (ELHVDPDLYTL) are cytoplasmic. The helical transmembrane segment at 236-256 (LFGESVLNDAVAIVLTYSISI) threads the bilayer. Topologically, residues 257–277 (YSPKENPNAFDAAAFFQSVGN) are lumenal. Residues 278 to 298 (FLGIFAGSFAMGSAYAIITAL) traverse the membrane as a helical segment. The Cytoplasmic segment spans residues 299–301 (LTK). 2 helical membrane passes run 302–322 (FTKLCEFPMLETGLFFLLSWS) and 323–343 (AFLSAEAAGLTGIVAVLFCGV). Residues 344–364 (TQAHYTYNNLSSDSKIRTKQL) are Cytoplasmic-facing. A helical transmembrane segment spans residues 365 to 385 (FEFMNFLAENVIFCYMGLALF). T386 is a topological domain (lumenal). Residues 387–407 (FQNHIFNALFILGAFLAIFVA) traverse the membrane as a helical segment. Topologically, residues 408-429 (RACNIYPLSFLLNLGRKQKIPW) are cytoplasmic. Residues 430–450 (NFQHMMMFSGLRGAIAFALAI) form a helical membrane-spanning segment. The Lumenal segment spans residues 451–465 (RNTESQPKQMMFTTT). A helical transmembrane segment spans residues 466 to 486 (LLLVFFTVWVFGGGTTPMLTW). Residues 487-645 (LQIRVGVDLD…EQTLGQSQLN (159 aa)) lie on the Cytoplasmic side of the membrane. The disordered stretch occupies residues 594–622 (QASSPCSPPARLGLDQKASPQTPGKENIY).

It belongs to the monovalent cation:proton antiporter 1 (CPA1) transporter (TC 2.A.36) family. Homodimer; phosphatidylinositol-4,5-bisphosphate (PIP2) and phosphatidylinositol 3,4,5-trisphosphate (PIP3) could be involved in the dimer stabilization. Interacts (via the C-terminus) with RACK1. Interacts with CHP1. As to expression, ubiquitously expressed in all tissues tested. Expressed at highest levels in heart and skeletal muscle, followed by placenta, kidney, and liver. Expressed in the brain, in the medulla and spinal cord.

The protein resides in the late endosome membrane. The protein localises to the early endosome membrane. It is found in the recycling endosome membrane. It localises to the cell membrane. Its subcellular location is the cytoplasmic vesicle. The protein resides in the phagosome membrane. It carries out the reaction Na(+)(in) + H(+)(out) = Na(+)(out) + H(+)(in). The catalysed reaction is K(+)(in) + H(+)(out) = K(+)(out) + H(+)(in). Functionally, endosomal Na(+), K(+)/H(+) antiporter. Mediates the electroneutral exchange of endosomal luminal H(+) for a cytosolic Na(+) or K(+). By facilitating proton efflux, SLC9A9 counteracts the acidity generated by vacuolar (V)-ATPase, thereby limiting luminal acidification. Regulates organellar pH and consequently, e.g., endosome maturation and endocytic trafficking of plasma membrane receptors and neurotransporters. Promotes the recycling of transferrin receptors back to the cell surface to facilitate additional iron uptake in the brain. Regulates synaptic transmission by regulating the luminal pH of axonal endosomes. Regulates phagosome lumenal pH, thus affecting phagosome maturation, and consequently, microbicidal activity in macrophages. Can also be active at the cell surface of specialized cells, e.g., in the inner ear hair bundles uses the high K(+) of the endolymph to regulate intracelular pH. In Homo sapiens (Human), this protein is Sodium/hydrogen exchanger 9.